The chain runs to 467 residues: Putative sulfoquinovose importer (467 aa).

Helical transmembrane passes span 17-37 (IAYG…TLYL), 54-74 (IIFL…GFLL), 88-108 (PFIL…FIAT), 121-141 (ALFM…GAMI), 160-180 (GGAT…QSLF), 185-205 (VGYA…MMLC), 238-258 (LLVL…KLAI), 275-295 (WMGF…PLTV), 303-323 (VYLA…FWGS), 325-345 (SFTF…VNSL), 379-399 (ISAA…GYVP), and 414-434 (LIFI…GFFY).

It belongs to the sodium:galactoside symporter (TC 2.A.2) family.

The protein localises to the cell inner membrane. Could be involved in sulfoquinovose import. This Escherichia coli (strain K12) protein is Putative sulfoquinovose importer (yihO).